A 389-amino-acid chain; its full sequence is MTDRNPRTAEASGLYTYSSRPRAVACQRRRHRDSILQPVEEPMSYGNIMYDRRVIRGNTYALPTGQVPGQPDPLELQRQQQARRRALARKRAQEQLKPRTPEPVEGRKHVDIQTELYLEEIADRIVEVDMECQTDAFLDRPPTPLFIPAKTGKDVATQILGGELFDFDLEVKPMLEVLVGKTIEQSLLEVMEEEELANLRARQYAYEEIRNVELAEVQRLEEQERRHREEKERRKKQQWEIVHKRNETLQKISALIFARQYLANLLPSVFDKLRNSGFFYDPIERDIEVGFLPWLMNEVEKSMEHSMVGRTVLDMLIRDVVERRINDYEHKEAMPPGQKTNVINGPNTVTDPSVTTLHTQKPVLDRVSSQPAPSQERKPVEEGGHLMAE.

Residues 63 to 106 are disordered; the sequence is PTGQVPGQPDPLELQRQQQARRRALARKRAQEQLKPRTPEPVEG. Basic residues predominate over residues 81 to 90; sequence QARRRALARK. The span at 91–106 shows a compositional bias: basic and acidic residues; it reads RAQEQLKPRTPEPVEG. Threonine 143 carries the post-translational modification Phosphothreonine; by MAPK1. Residues 206–242 adopt a coiled-coil conformation; sequence YEEIRNVELAEVQRLEEQERRHREEKERRKKQQWEIV. The tract at residues 332 to 389 is disordered; that stretch reads EAMPPGQKTNVINGPNTVTDPSVTTLHTQKPVLDRVSSQPAPSQERKPVEEGGHLMAE. A compositionally biased stretch (polar residues) spans 338 to 359; it reads QKTNVINGPNTVTDPSVTTLHT. The span at 375–389 shows a compositional bias: basic and acidic residues; the sequence is QERKPVEEGGHLMAE.

The protein belongs to the flagellar radial spoke RSP3 family. In terms of assembly, component of the axonemal radial spoke 1 (RS1) and 2 (RS2) complexes, at least composed of spoke head proteins RSPH1, RSPH3B, RSPH9 and the cilia-specific component RSPH4A or sperm-specific component RSPH6A, spoke stalk proteins RSPH14, DNAJB13, DYDC1, ROPN1L and NME5, and the RS1 complex-specific anchor protein IQUB. Interacts with IQUB. Interacts with phosphorylated MAPK1. Interacts with MEK1. Interacts with PKA regulatory subunits PRKAR1A and PRKAR1B. Interacts with RSPH1. Interacts with RSPH4A. Interacts with RSPH6A. Interacts with RSPH9. Interacts with LRRC23. Expressed in ependymal cells (at protein level).

Its subcellular location is the cytoplasm. It localises to the cytoskeleton. The protein localises to the cilium axoneme. The protein resides in the flagellum axoneme. Functions as part of axonemal radial spoke complexes that play an important part in the motility of sperm and cilia. Functions as a protein kinase A-anchoring protein that scaffolds the cAMP-dependent protein kinase holoenzyme. May serve as a point of convergence for MAPK and PKA signaling in cilia. This chain is Radial spoke head protein 3 homolog B (Rsph3b), found in Mus musculus (Mouse).